The primary structure comprises 965 residues: FKBP12-associated protein 1 (965 aa).

The RING-type; degenerate zinc finger occupies 68 to 118; the sequence is CMICTVEMDYTCQMFACKRCYRVFDYGCIREWALKSTEKTVDRIWKCPNCY. NF-X1-type zinc fingers lie at residues 159-177, 216-235, 362-382, 468-487, and 586-606; these read CMHG…ECTR, CSIH…PCPE, CGKH…PCLQ, CGIH…PCLE, and CYHT…VCKQ. Positions 733 to 796 constitute an R3H domain; it reads ERWCSQIEAI…MRSVFIKKED (64 aa). At threonine 951 the chain carries Phosphothreonine. The residue at position 958 (serine 958) is a Phosphoserine.

It belongs to the NFX1 family. In terms of assembly, interacts with FPR1.

The protein localises to the cytoplasm. It localises to the nucleus. Functionally, may play a role in transcription regulation. The polypeptide is FKBP12-associated protein 1 (FAP1) (Saccharomyces cerevisiae (strain ATCC 204508 / S288c) (Baker's yeast)).